The sequence spans 268 residues: Undecaprenyl-diphosphatase (268 aa).

Helical transmembrane passes span 5-25 (TIAQ…IPVS), 43-63 (GKAF…SVYA), 84-104 (LGIL…YQII), 107-127 (VLFE…IVLL), 184-204 (AAEF…AYDL), 214-234 (ADLQ…VLVV), and 247-267 (ALFG…VLVL).

The protein belongs to the UppP family.

The protein localises to the cell inner membrane. The enzyme catalyses di-trans,octa-cis-undecaprenyl diphosphate + H2O = di-trans,octa-cis-undecaprenyl phosphate + phosphate + H(+). In terms of biological role, catalyzes the dephosphorylation of undecaprenyl diphosphate (UPP). Confers resistance to bacitracin. This is Undecaprenyl-diphosphatase from Chelativorans sp. (strain BNC1).